A 212-amino-acid polypeptide reads, in one-letter code: dITP/XTP pyrophosphatase (212 aa).

Ser-7–Lys-12 serves as a coordination point for substrate. Positions 39 and 68 each coordinate Mg(2+). Asp-68 functions as the Proton acceptor in the catalytic mechanism. Substrate is bound by residues Ser-69, Phe-165–Asp-168, Lys-188, and His-193–Arg-194.

This sequence belongs to the HAM1 NTPase family. In terms of assembly, homodimer. It depends on Mg(2+) as a cofactor.

The enzyme catalyses XTP + H2O = XMP + diphosphate + H(+). The catalysed reaction is dITP + H2O = dIMP + diphosphate + H(+). It catalyses the reaction ITP + H2O = IMP + diphosphate + H(+). Its function is as follows. Pyrophosphatase that catalyzes the hydrolysis of nucleoside triphosphates to their monophosphate derivatives, with a high preference for the non-canonical purine nucleotides XTP (xanthosine triphosphate), dITP (deoxyinosine triphosphate) and ITP. Seems to function as a house-cleaning enzyme that removes non-canonical purine nucleotides from the nucleotide pool, thus preventing their incorporation into DNA/RNA and avoiding chromosomal lesions. This is dITP/XTP pyrophosphatase from Leptothrix cholodnii (strain ATCC 51168 / LMG 8142 / SP-6) (Leptothrix discophora (strain SP-6)).